Here is a 728-residue protein sequence, read N- to C-terminus: Hepatocyte growth factor (728 aa).

A signal peptide spans 1 to 32; that stretch reads MMWGTKLLPVLLLQHVLLHLLLLPVTIPYAEG. Pyrrolidone carboxylic acid is present on Gln33. Residues 38-124 enclose the PAN domain; the sequence is NTLHEFKKSA…HEFDLYENKD (87 aa). Intrachain disulfides connect Cys71-Cys97, Cys75-Cys85, Cys129-Cys207, Cys150-Cys190, Cys178-Cys202, Cys212-Cys289, Cys233-Cys272, and Cys261-Cys284. Kringle domains follow at residues 129 to 207 and 212 to 289; these read CIIG…IPQC and CMTC…IKMC. The N-linked (GlcNAc...) asparagine glycan is linked to Asn295. Disulfide bonds link Cys306–Cys384, Cys327–Cys366, Cys355–Cys378, Cys392–Cys470, Cys413–Cys453, Cys441–Cys465, Cys488–Cys607, Cys520–Cys536, Cys615–Cys682, Cys645–Cys661, and Cys672–Cys700. Kringle domains follow at residues 306–384 and 392–470; these read CIKG…IPKC and CYRG…ISRC. Asn403 is a glycosylation site (N-linked (GlcNAc...) asparagine). One can recognise a Peptidase S1 domain in the interval 496–724; the sequence is VVNGIPTQTT…YAKWIHKVIL (229 aa). N-linked (GlcNAc...) asparagine glycosylation is found at Asn569 and Asn656.

Belongs to the peptidase S1 family. Plasminogen subfamily. Dimer of an alpha chain and a beta chain linked by a disulfide bond. Interacts with SRPX2; the interaction increases HGF mitogenic activity. The single-chain precursor undergoes proteolytic processing by TMPRSS13 resulting in an active two-chain form. The single-chain precursor undergoes proteolytic processing by HGFAC resulting in an active two-chain form.

In terms of biological role, potent mitogen for mature parenchymal hepatocyte cells, seems to be a hepatotrophic factor, and acts as a growth factor for a broad spectrum of tissues and cell types. Activating ligand for the receptor tyrosine kinase MET by binding to it and promoting its dimerization. Activates MAPK signaling following TMPRSS13 cleavage and activation. This is Hepatocyte growth factor (Hgf) from Rattus norvegicus (Rat).